We begin with the raw amino-acid sequence, 229 residues long: NAD(P)H-hydrate epimerase (229 aa).

A YjeF N-terminal domain is found at 11-222 (YAAADIRAAE…DVGLDLSGAT (212 aa)). 59-63 (NNGGD) provides a ligand contact to (6S)-NADPHX. K(+)-binding residues include N60 and D124. Residues 128–136 (GIGTTASPA) and D164 contribute to the (6S)-NADPHX site. S167 is a binding site for K(+).

The protein belongs to the NnrE/AIBP family. K(+) serves as cofactor.

It carries out the reaction (6R)-NADHX = (6S)-NADHX. It catalyses the reaction (6R)-NADPHX = (6S)-NADPHX. Catalyzes the epimerization of the S- and R-forms of NAD(P)HX, a damaged form of NAD(P)H that is a result of enzymatic or heat-dependent hydration. This is a prerequisite for the S-specific NAD(P)H-hydrate dehydratase to allow the repair of both epimers of NAD(P)HX. This chain is NAD(P)H-hydrate epimerase, found in Clavibacter sepedonicus (Clavibacter michiganensis subsp. sepedonicus).